Consider the following 427-residue polypeptide: MIRNLTLLSKSSLDPKCLILKHSNKNLNNYFKQITFRYYSKTNPIIKQQNHNNINNYNNTTPETQERINELLKLFPPIKYGFAYGSGVISQKGYNRNGDGSTSTENPSKKEEQSPMIDLIFAVENSTKWHSLNLVNNQSHYSFLGLMGAHIVAKVQYMNAKIYFNTLLEHNGIKFKYGVIEYKDLIDDLKNWKTLYLSGRMQKPIFNLPTSSTEGLKEIQEINSEYNLKNAVITSLLMLPETFTEYDLYHTISKLSYSGDIRMKGAENPMKTHNIVINNIDGFRSLYFPIINDHLTQYLNVILENGDEVNSSLILSQNNNNKNNNKNETTTTAAPKMVTFKSKQDPMNYLNLLMMLPGSIKSTMLKEVRNNMKLMKSDEKIDPTILHNLIFMIVSKSSFAQTVKGVFTAGISKSLNYMKLKLKKNKK.

Over residues 94-106 (YNRNGDGSTSTEN) the composition is skewed to polar residues. Residues 94–113 (YNRNGDGSTSTENPSKKEEQ) form a disordered region.

The protein belongs to the TAM41 family. Mg(2+) is required as a cofactor.

It localises to the mitochondrion inner membrane. The enzyme catalyses a 1,2-diacyl-sn-glycero-3-phosphate + CTP + H(+) = a CDP-1,2-diacyl-sn-glycerol + diphosphate. The protein operates within phospholipid metabolism; CDP-diacylglycerol biosynthesis; CDP-diacylglycerol from sn-glycerol 3-phosphate: step 3/3. Its function is as follows. Catalyzes the formation of CDP-diacylglycerol (CDP-DAG) from phosphatidic acid (PA) in the mitochondrial inner membrane. Required for the biosynthesis of the dimeric phospholipid cardiolipin, which stabilizes supercomplexes of the mitochondrial respiratory chain in the mitochondrial inner membrane. The chain is Phosphatidate cytidylyltransferase, mitochondrial from Dictyostelium discoideum (Social amoeba).